The sequence spans 404 residues: 2,3-bisphosphoglycerate-independent phosphoglycerate mutase (404 aa).

A disordered region spans residues Leu-155 to Arg-183. A compositionally biased stretch (basic and acidic residues) spans Ser-162–Arg-183.

The protein belongs to the BPG-independent phosphoglycerate mutase family. A-PGAM subfamily.

It catalyses the reaction (2R)-2-phosphoglycerate = (2R)-3-phosphoglycerate. Its pathway is carbohydrate degradation; glycolysis; pyruvate from D-glyceraldehyde 3-phosphate: step 3/5. In terms of biological role, catalyzes the interconversion of 2-phosphoglycerate and 3-phosphoglycerate. In Thermoplasma acidophilum (strain ATCC 25905 / DSM 1728 / JCM 9062 / NBRC 15155 / AMRC-C165), this protein is 2,3-bisphosphoglycerate-independent phosphoglycerate mutase.